Reading from the N-terminus, the 310-residue chain is Acetyl-coenzyme A carboxylase carboxyl transferase subunit beta (310 aa).

One can recognise a CoA carboxyltransferase N-terminal domain in the interval Leu27–Thr296. 4 residues coordinate Zn(2+): Cys31, Cys34, Cys50, and Cys53. Residues Cys31–Cys53 form a C4-type zinc finger. The disordered stretch occupies residues Thr282–His310.

Belongs to the AccD/PCCB family. Acetyl-CoA carboxylase is a heterohexamer composed of biotin carboxyl carrier protein (AccB), biotin carboxylase (AccC) and two subunits each of ACCase subunit alpha (AccA) and ACCase subunit beta (AccD). Zn(2+) serves as cofactor.

The protein resides in the cytoplasm. The catalysed reaction is N(6)-carboxybiotinyl-L-lysyl-[protein] + acetyl-CoA = N(6)-biotinyl-L-lysyl-[protein] + malonyl-CoA. Its pathway is lipid metabolism; malonyl-CoA biosynthesis; malonyl-CoA from acetyl-CoA: step 1/1. Its function is as follows. Component of the acetyl coenzyme A carboxylase (ACC) complex. Biotin carboxylase (BC) catalyzes the carboxylation of biotin on its carrier protein (BCCP) and then the CO(2) group is transferred by the transcarboxylase to acetyl-CoA to form malonyl-CoA. This chain is Acetyl-coenzyme A carboxylase carboxyl transferase subunit beta, found in Chromohalobacter salexigens (strain ATCC BAA-138 / DSM 3043 / CIP 106854 / NCIMB 13768 / 1H11).